A 639-amino-acid polypeptide reads, in one-letter code: MIHITLPDGSQREFAGPVTVAEVAASIGSGLAKAALAGKIGDKVVDTSYQITQDSPLSIVTAKDADGLEVIRHSTAHLLAYAVKELFPDAQVTIGPVIENGFYYDFSYKRPFTPEDLAAIEKRMAELAAKDEPVVRRVLPRDEAVAYFKGLGEHYKAEIIASIPTNEDVSLYREGGFEDLCRGPHVPSTGKLKFFKLMKVAGAYWRGDHRNEMLQRIYGTAWATKEELQEYLHMLEEAEKRDHRKLGRELDLFHIDEHSPGTVFWHPKGWTLWQEVEQYMRRVYRDNGYQEVKGPQILDKTLWEKTGHWDKYRDNMFTTESEKRDYALKPMNCPGHILIFKQGIKSYRDLPLRYGEFGQCHRNEPTGGLHGIMRVRGFTQDDGHIFCTEDHILAECTAYTALLQKVYKDFGFHNIIYKVATRPEARIGSDESWDKAEHALMESLRASGCEFEIAPGDGAFYGPKIEYTLKDAIGRQWQCGTMQVDFSMPERLDAEYVGEDGGRHRPVMLHRAIVGSLERFIGILIEEHAGALPVWLAPVQVAVLNITDAQQDYCREIAAKLQKALPNQGLRVVTDLRNEKITYKIREHSLQKLPYILVAGDKEKAAGAVAVRARGNKDLGVMSLDAFVDLIAQDIASKV.

The region spanning 1 to 61 (MIHITLPDGS…TQDSPLSIVT (61 aa)) is the TGS domain. Residues 242-533 (DHRKLGRELD…LIEEHAGALP (292 aa)) are catalytic. C333, H384, and H510 together coordinate Zn(2+).

The protein belongs to the class-II aminoacyl-tRNA synthetase family. As to quaternary structure, homodimer. Zn(2+) is required as a cofactor.

The protein resides in the cytoplasm. The catalysed reaction is tRNA(Thr) + L-threonine + ATP = L-threonyl-tRNA(Thr) + AMP + diphosphate + H(+). Catalyzes the attachment of threonine to tRNA(Thr) in a two-step reaction: L-threonine is first activated by ATP to form Thr-AMP and then transferred to the acceptor end of tRNA(Thr). Also edits incorrectly charged L-seryl-tRNA(Thr). This is Threonine--tRNA ligase from Acidovorax sp. (strain JS42).